The primary structure comprises 408 residues: Prenyltransferase criF (408 aa).

Arg94, Lys181, Tyr183, Arg248, Lys250, Tyr252, Gln334, Tyr336, Tyr400, and Tyr404 together coordinate dimethylallyl diphosphate.

Belongs to the tryptophan dimethylallyltransferase family. In terms of assembly, homodimer.

The catalysed reaction is preechinulin + dimethylallyl diphosphate = tardioxopiperazine B + diphosphate. The enzyme catalyses preechinulin + dimethylallyl diphosphate = tardioxopiperazine A + diphosphate. It carries out the reaction tardioxopiperazine A + dimethylallyl diphosphate = echinulin + diphosphate. It catalyses the reaction tardioxopiperazine A + dimethylallyl diphosphate = variecolorin L + diphosphate. The catalysed reaction is neoechinulin A + dimethylallyl diphosphate = variecolorin G + diphosphate. The enzyme catalyses neoechinulin A + dimethylallyl diphosphate = isoechinulin A + diphosphate. It carries out the reaction isoechinulin A + dimethylallyl diphosphate = dehydroechinulin + diphosphate. It catalyses the reaction neoechinulin B + dimethylallyl diphosphate = isoechinulin B + diphosphate. The protein operates within secondary metabolite biosynthesis. It participates in alkaloid biosynthesis. Prenyltransferase; part of the gene cluster that mediates the biosynthesis of echinulin family alkaloid. The pathway begins with the biosynthesis of the cyclic dipeptide cyclo-L-Trp-L-Ala (cyclo-TA) by the NRPS criC via condensation of L-alanine and L-tryptophan. The prenyltransferase criA then catalyzes the first prenylation step, a reverse prenylation reaction at C2, to yield preechinulin. Preechinulin is the substrate of the cytochrome P450 monooxygenase criE that catalyzes the formation of the double bond between C10 and C11 to produce neoechulin A. The unique prenyltransferase criF functions as a competitive enzyme with criE for preechinulin metabolization and uses preechinulin for effective regiospecific prenylations. Preechinulin is prenylated by criF at C5 or C7. C7-prenylation leads to accumulation of tardioxopiperazine B without further modification by criF. In contrast, the C5-prenylated tardioxopiperazine A can be prenylated again by criF, predominantly at C7 to form echinulin or less frequently at C4 to give variecolorin L. CriF also accepts neoechilunin A to produce varlecolorin G (prenylation at C5) or isoechinulin A (prenylation at C7). CriF further converts isoechinulin A into dehydroechinulin. Moreover, a yet unidentified enzyme can also convert neoechilunin A into neoechilunin B by introducing a double bond between positions C14 and C17 and thus provides a further substrate to criF for C5 and C7 prenylation. The protein is Prenyltransferase criF of Aspergillus cristatus (Chinese Fuzhuan brick tea-fermentation fungus).